Consider the following 240-residue polypeptide: Uridylate kinase (240 aa).

Residue 13-16 (KLSG) participates in ATP binding. An involved in allosteric activation by GTP region spans residues 21 to 26 (GEKGFG). Position 55 (Gly55) interacts with UMP. Residues Gly56 and Arg60 each coordinate ATP. UMP-binding positions include Asp75 and 136 to 143 (IGNPYFST). 3 residues coordinate ATP: Asn164, Tyr170, and Asp173.

This sequence belongs to the UMP kinase family. In terms of assembly, homohexamer.

Its subcellular location is the cytoplasm. The catalysed reaction is UMP + ATP = UDP + ADP. Its pathway is pyrimidine metabolism; CTP biosynthesis via de novo pathway; UDP from UMP (UMPK route): step 1/1. With respect to regulation, allosterically activated by GTP. Inhibited by UTP. In terms of biological role, catalyzes the reversible phosphorylation of UMP to UDP. The sequence is that of Uridylate kinase from Staphylococcus aureus (strain USA300).